A 921-amino-acid chain; its full sequence is Eukaryotic translation initiation factor 3 subunit A (921 aa).

The PCI domain occupies 319–493 (FKFYASQLVL…GVVSFMEDPF (175 aa)). The segment at 497–524 (GGSTATNADDEQRNDDGYEETHVEEEPE) is disordered. The segment covering 506–517 (DEQRNDDGYEET) has biased composition (basic and acidic residues). Coiled-coil stretches lie at residues 562 to 647 (ARNE…NEKT) and 693 to 868 (ERMS…IKRN). Over residues 818–865 (AAKEHDDRQRMLQDRLTKERKERERVNKEKDEAARKQREIEEAVERTI) the composition is skewed to basic and acidic residues. The interval 818–921 (AAKEHDDRQR…KMKLRRAGRA (104 aa)) is disordered. Pro residues predominate over residues 873 to 890 (PAPPVRSAPPARAAPPPR). Residues 903–913 (PEKKLTYAEKM) are compositionally biased toward basic and acidic residues.

Belongs to the eIF-3 subunit A family. As to quaternary structure, component of the eukaryotic translation initiation factor 3 (eIF-3) complex.

The protein resides in the cytoplasm. RNA-binding component of the eukaryotic translation initiation factor 3 (eIF-3) complex, which is involved in protein synthesis of a specialized repertoire of mRNAs and, together with other initiation factors, stimulates binding of mRNA and methionyl-tRNAi to the 40S ribosome. The eIF-3 complex specifically targets and initiates translation of a subset of mRNAs involved in cell proliferation. The protein is Eukaryotic translation initiation factor 3 subunit A of Eremothecium gossypii (strain ATCC 10895 / CBS 109.51 / FGSC 9923 / NRRL Y-1056) (Yeast).